Reading from the N-terminus, the 1202-residue chain is Liprin-alpha-1 (1202 aa).

Residues 1–33 (MMCEVMPTISEAEGPPGGGGGHGSGSPSQPDAD) form a disordered region. A compositionally biased stretch (gly residues) spans 15–24 (PPGGGGGHGS). A coiled-coil region spans residues 34-141 (SHFEQLMVSM…VSRHERSLRM (108 aa)). S150 is subject to Phosphoserine. Residues 176–214 (EKVRERLRVALERCSLLEEELGATHKELMILKEQNNQKK) adopt a coiled-coil conformation. Disordered stretches follow at residues 224 to 245 (NHEQENTPSTSGKRSSDGSLSH) and 426 to 446 (KNQELQRARQREKMNEEHNKR). Position 230 is a phosphothreonine (T230). 3 positions are modified to phosphoserine: S239, S242, and S244. Coiled coils occupy residues 249–521 (LAKV…GASL) and 623–669 (ADAH…SGSL). S448 is subject to Phosphoserine. The span at 651 to 662 (ENTEQRAEEIES) shows a compositional bias: basic and acidic residues. Positions 651 to 855 (ENTEQRAEEI…SKLGGQAEKN (205 aa)) are disordered. Residues S666, S668, and S693 each carry the phosphoserine modification. A compositionally biased stretch (low complexity) spans 686-700 (ASSLASSSPPGSGRS). Basic and acidic residues predominate over residues 725 to 736 (SREEVRDDKTTI). Residue T761 is modified to Phosphothreonine. The segment covering 762–771 (VSHEDIRDIR) has biased composition (basic and acidic residues). A Phosphoserine modification is found at S763. Polar residues predominate over residues 832–841 (VSETDNSSQD). Positions 847–871 (KLGGQAEKNRKLQKKHELLEEARRQ) form a coiled coil. 3 consecutive SAM domains span residues 878–944 (WDGP…IMSL), 963–1027 (NHEW…LRRL), and 1051–1120 (WSND…LLVM). Residues 1021 to 1050 (IMCLRRLNYDRKELERKREESQSEIKDVLV) adopt a coiled-coil conformation. Position 1133 is a phosphoserine (S1133). A Phosphothreonine modification is found at T1159. The interval 1163 to 1202 (NFRVTSSMSSPSMQPKKMQMDGNVSGTQRLDSATVRTYSC) is disordered. Residues 1168–1179 (SSMSSPSMQPKK) show a composition bias toward low complexity. Residues 1184 to 1202 (GNVSGTQRLDSATVRTYSC) show a composition bias toward polar residues.

This sequence belongs to the liprin family. Liprin-alpha subfamily. In terms of assembly, homodimer. Interacts with PTPRF (via D2 domain). Part of a cortical microtubule stabilization complex (CMSC) composed of KANK1, PPFIA1, PPFIBP1, ERC1/ELKS, PHLDB2/LL5beta, CLASPs, KIF21A and possibly additional interactors; within CMSCs KANK1 and PHLDB2/LL5beta seem to be the core components for recruiting microtubule-binding proteins KIF21A and CLASPs, whereas PPFIA1, PPFIBP1 and ERC1/ELKS serve as scaffolds for protein clustering. As to expression, ubiquitous.

The protein resides in the cytoplasm. It localises to the cell cortex. In terms of biological role, may regulate the disassembly of focal adhesions. May localize receptor-like tyrosine phosphatases type 2A at specific sites on the plasma membrane, possibly regulating their interaction with the extracellular environment and their association with substrates. In Homo sapiens (Human), this protein is Liprin-alpha-1 (PPFIA1).